A 1299-amino-acid polypeptide reads, in one-letter code: MDSLDHMLTDPLELGPCGDGHGTRIMEDCLLGGTRVSLPEDLLEDPEIFFDVVSLSTWQEVLSDSQREHLQQFLPQFPEDSAEQQNELILALFSGENFRFGNPLHIAQKLFRDGHFNPEVVKYRQLCFKSQYKRYLNSQQQYFHRLLKQILASRSDLLEMARRSGPALPFRQKRPSPSRTPEEREWRTQQRYLKVLREVKEECGDTALSSDEEDLSSWLPSSPARSPSPAVPLRVVPTLSTTDMKTADKVELGDSDLKIMLKKHHEKRKHQPDHPDLLTGDLTLNDIMTRVNAGRKGSLAALYDLAVLKKKVKEKEEKKKKKIKTIKSEAEDLAEPLSSTEGVAPLSQAPSPLAIPAIKEEPLEDLKPCLGINEISSSFFSLLLEILLLESQASLPMLEERVLDWQSSPASSLNSWFSAAPNWAELVLPALQYLAGESRAVPSSFSPFVEFKEKTQQWKLLGQSQDNEKELAALFQLWLETKDQAFCKQENEDSSDATTPVPRVRTDYVVRPSTGEEKRVFQEQERYRYSQPHKAFTFRMHGFESVVGPVKGVFDKETSLNKAREHSLLRSDRPAYVTILSLVRDAAARLPNGEGTRAEICELLKDSQFLAPDVTSTQVNTVVSGALDRLHYEKDPCVKYDIGRKLWIYLHRDRSEEEFERIHQAQAAAAKARKALQQKPKPPSKVKSSSKESSIKVLSSGPSEQSQMSLSDSSMPPTPVTPVTPTTPALPAIPISPPPVSAVNKSGPSTVSEPAKSSSGVLLVSSPTMPHLGTMLSPASSQTAPSSQAAARVVSHSGSAGLSQVRVVAQPSLPAVPQQSGGPAQTLPQMPAGPQIRVPATATQTKVVPQTVMATVPVKAQTTAATVQRPGPGQTGLTVTSLPATASPVSKPATSSPGTSAPSASTAAVIQNVTGQNIIKQVAITGQLGVKPQTGNSIPLTATNFRIQGKDVLRLPPSSITTDAKGQTVLRITPDMMATLAKSQVTTVKLTQDLFGTGGNTTGKGISATLHVTSNPVHAADSPAKASSASAPSSTPTGTTVVKVTPDLKPTEASSSAFRLMPALGVSVADQKGKSTVASSEAKPAATIRIVQGLGVMPPKAGQTITVATHAKQGASVASGSGTVHTSAVSLPSMNAAVSKTVAVASGAASTPISISTGAPTVRQVPVSTTVVSTSQAGKLPTRITVPLSVISQPMKGKSVVTAPIIKGNLGANLSGLGRNIILTTMPAGTKLIAGNKPVSFLTAQQLQQLQQQGQATQVRIQTVPASHLQQGTASGSSKAVSTVVVTTAPSPKQAPEQQ.

Residues 39–156 (PEDLLEDPEI…LKQILASRSD (118 aa)) form the DEUBAD domain. Disordered stretches follow at residues 163-187 (RSGPALPFRQKRPSPSRTPEEREWR) and 204-232 (GDTALSSDEEDLSSWLPSSPARSPSPAVP). Residues 216-232 (SSWLPSSPARSPSPAVP) show a composition bias toward low complexity. Phosphoserine occurs at positions 228 and 298. Lys-327 is covalently cross-linked (Glycyl lysine isopeptide (Lys-Gly) (interchain with G-Cter in SUMO2)). Ser-351 carries the post-translational modification Phosphoserine. The segment at 370–495 (LGINEISSSF…FCKQENEDSS (126 aa)) is winged-helix like domain. Residue Lys-469 forms a Glycyl lysine isopeptide (Lys-Gly) (interchain with G-Cter in SUMO2) linkage. Lys-488 is covalently cross-linked (Glycyl lysine isopeptide (Lys-Gly) (interchain with G-Cter in SUMO1); alternate). Lys-488 is covalently cross-linked (Glycyl lysine isopeptide (Lys-Gly) (interchain with G-Cter in SUMO2); alternate). Disordered stretches follow at residues 669–760 (AAKA…SSSG), 882–902 (LPATASPVSKPATSSPGTSAP), and 1017–1043 (VHAADSPAKASSASAPSSTPTGTTVVK). Low complexity-rich tracts occupy residues 677 to 688 (QQKPKPPSKVKS), 695 to 715 (IKVLSSGPSEQSQMSLSDSSM), and 723 to 733 (VTPTTPALPAI). Residues 744-760 (NKSGPSTVSEPAKSSSG) show a composition bias toward polar residues. 2 stretches are compositionally biased toward low complexity: residues 892–902 (PATSSPGTSAP) and 1019–1043 (AADSPAKASSASAPSSTPTGTTVVK). Ser-1022 is subject to Phosphoserine. Lys-1237 bears the N6-acetyllysine mark. Ser-1291 is modified (phosphoserine).

The protein belongs to the NFRKB family. In terms of assembly, component of the chromatin remodeling INO80 complex; specifically part of a complex module associated with the N-terminus of INO80. Interacts with UCHL5; NFRKB competes with ADRM1 for interaction with UCHL5. As to expression, expressed in thymus, brain, testes, spleen and liver.

It localises to the nucleus. Binds to the DNA consensus sequence 5'-GGGGAATCTCC-3'. Its function is as follows. Putative regulatory component of the chromatin remodeling INO80 complex which is involved in transcriptional regulation, DNA replication and probably DNA repair. Modulates the deubiquitinase activity of UCHL5 in the INO80 complex. The chain is Nuclear factor related to kappa-B-binding protein (NFRKB) from Homo sapiens (Human).